Here is a 450-residue protein sequence, read N- to C-terminus: D-inositol 3-phosphate glycosyltransferase (450 aa).

1D-myo-inositol 3-phosphate is bound at residue His26. UDP-N-acetyl-alpha-D-glucosamine contacts are provided by residues 32-33 and Gly40; that span reads QP. 1D-myo-inositol 3-phosphate contacts are provided by residues 37-42, Lys95, Tyr128, Thr152, and Arg172; that span reads DAGGMN. UDP-N-acetyl-alpha-D-glucosamine-binding residues include Arg246, Lys251, and Gln313. Mg(2+) contacts are provided by Tyr322, Arg323, and Ala325. Glu335 and Glu343 together coordinate UDP-N-acetyl-alpha-D-glucosamine. Residue Thr349 coordinates Mg(2+).

It belongs to the glycosyltransferase group 1 family. MshA subfamily. Homodimer.

The catalysed reaction is 1D-myo-inositol 3-phosphate + UDP-N-acetyl-alpha-D-glucosamine = 1D-myo-inositol 2-acetamido-2-deoxy-alpha-D-glucopyranoside 3-phosphate + UDP + H(+). In terms of biological role, catalyzes the transfer of a N-acetyl-glucosamine moiety to 1D-myo-inositol 3-phosphate to produce 1D-myo-inositol 2-acetamido-2-deoxy-glucopyranoside 3-phosphate in the mycothiol biosynthesis pathway. In Mycolicibacterium vanbaalenii (strain DSM 7251 / JCM 13017 / BCRC 16820 / KCTC 9966 / NRRL B-24157 / PYR-1) (Mycobacterium vanbaalenii), this protein is D-inositol 3-phosphate glycosyltransferase.